We begin with the raw amino-acid sequence, 292 residues long: Outer membrane protein assembly factor BamD (292 aa).

Positions 1–26 are cleaved as a signal peptide; it reads MIQRPTFFTPTHLLAMLLATFVLITG. Cys-27 carries the N-palmitoyl cysteine lipid modification. Cys-27 is lipidated: S-diacylglycerol cysteine.

The protein belongs to the BamD family. As to quaternary structure, part of the Bam complex.

It is found in the cell outer membrane. Its function is as follows. Part of the outer membrane protein assembly complex, which is involved in assembly and insertion of beta-barrel proteins into the outer membrane. This chain is Outer membrane protein assembly factor BamD, found in Xylella fastidiosa (strain 9a5c).